We begin with the raw amino-acid sequence, 441 residues long: Protein cortex (441 aa).

7 WD repeats span residues 110 to 148, 149 to 187, 193 to 233, 235 to 276, 277 to 320, 345 to 379, and 380 to 420; these read SITSFPDVLDWSHDDILVAALGKKYHKWSWRTQSPVDQG, QTMFDIRCCKFDPKGKRLLLGTDMRVEVHNELSKCQFVQ, IQIC…KSLV, IEGA…RFMK, TNEI…KLRQ, SLWSLDVNVPYPKSSELVVMSNFDTVVDHWGESHT, and GLNR…KILA. The D-box signature appears at 379-390; sequence TGLNRIRTMVFS.

This sequence belongs to the WD repeat CORT family.

The protein localises to the cytoplasm. Functionally, controls wing pigmentation patterning, possibly by regulating scale cell development. Probably acts as an activator of the anaphase promoting complex/cyclosome (APC/C) that promotes the ubiquitin ligase activity and substrate specificity of the APC/C. The protein is Protein cortex of Biston betularia (Pepper-and-salt geometer moth).